The sequence spans 298 residues: tRNA pseudouridine synthase B (298 aa).

D39 acts as the Nucleophile in catalysis.

This sequence belongs to the pseudouridine synthase TruB family. Type 1 subfamily.

The catalysed reaction is uridine(55) in tRNA = pseudouridine(55) in tRNA. In terms of biological role, responsible for synthesis of pseudouridine from uracil-55 in the psi GC loop of transfer RNAs. The sequence is that of tRNA pseudouridine synthase B from Oenococcus oeni (strain ATCC BAA-331 / PSU-1).